Reading from the N-terminus, the 30-residue chain is Cycloviolin-D (30 aa).

A cross-link (cyclopeptide (Gly-Asn)) is located at residues glycine 1–asparagine 30. 3 disulfide bridges follow: cysteine 4–cysteine 20, cysteine 8–cysteine 22, and cysteine 13–cysteine 27.

This is a cyclic peptide.

Its function is as follows. Probably participates in a plant defense mechanism. Has anti-HIV activity. The protein is Cycloviolin-D of Leonia cymosa (Sacha uba).